The primary structure comprises 132 residues: Agouti-signaling protein (132 aa).

The N-terminal stretch at 1–22 (MDVTRLLLATLLVFLCFFTAYS) is a signal peptide. Asparagine 39 carries an N-linked (GlcNAc...) asparagine glycan. The tract at residues 58–88 (KSKQMSRKEAEKKRSSKKEASMKKVARPRTP) is disordered. Positions 63 to 79 (SRKEAEKKRSSKKEASM) are enriched in basic and acidic residues. 5 disulfides stabilise this stretch: cysteine 93–cysteine 108, cysteine 100–cysteine 114, cysteine 107–cysteine 125, cysteine 111–cysteine 132, and cysteine 116–cysteine 123. One can recognise an Agouti domain in the interval 93 to 132 (CVATRDSCKPPAPACCDPCASCQCRFFRSACSCRVLSLNC).

The protein localises to the secreted. Functionally, involved in the regulation of melanogenesis. The binding of ASP to MC1R precludes alpha-MSH initiated signaling and thus blocks production of cAMP, leading to a down-regulation of eumelanogenesis (brown/black pigment) and thus increasing synthesis of pheomelanin (yellow/red pigment). The polypeptide is Agouti-signaling protein (ASIP) (Cercopithecus mitis (Blue monkey)).